Consider the following 297-residue polypeptide: Homoserine kinase (297 aa).

82 to 92 (PVSRGLGSSAA) serves as a coordination point for ATP.

Belongs to the GHMP kinase family. Homoserine kinase subfamily.

Its subcellular location is the cytoplasm. It carries out the reaction L-homoserine + ATP = O-phospho-L-homoserine + ADP + H(+). It functions in the pathway amino-acid biosynthesis; L-threonine biosynthesis; L-threonine from L-aspartate: step 4/5. Its function is as follows. Catalyzes the ATP-dependent phosphorylation of L-homoserine to L-homoserine phosphate. This chain is Homoserine kinase, found in Clostridium botulinum (strain Langeland / NCTC 10281 / Type F).